An 80-amino-acid polypeptide reads, in one-letter code: Putative membrane protein insertion efficiency factor (80 aa).

A disordered region spans residues 61–80 (KTGKDPVPDHFSLKRNQEGE). Basic and acidic residues predominate over residues 62–80 (TGKDPVPDHFSLKRNQEGE).

This sequence belongs to the UPF0161 family.

Its subcellular location is the cell membrane. Functionally, could be involved in insertion of integral membrane proteins into the membrane. The sequence is that of Putative membrane protein insertion efficiency factor from Streptococcus pneumoniae (strain 70585).